Consider the following 257-residue polypeptide: Ribosomal RNA small subunit methyltransferase J (257 aa).

S-adenosyl-L-methionine contacts are provided by residues 107–108, 123–124, and Asp-177; these read RD and ER.

The protein belongs to the methyltransferase superfamily. RsmJ family.

The protein localises to the cytoplasm. It carries out the reaction guanosine(1516) in 16S rRNA + S-adenosyl-L-methionine = N(2)-methylguanosine(1516) in 16S rRNA + S-adenosyl-L-homocysteine + H(+). Specifically methylates the guanosine in position 1516 of 16S rRNA. The sequence is that of Ribosomal RNA small subunit methyltransferase J from Haemophilus influenzae (strain PittGG).